The following is a 264-amino-acid chain: Glutamate racemase (264 aa).

Substrate contacts are provided by residues 10-11 (DS) and 42-43 (YG). The active-site Proton donor/acceptor is C73. 74–75 (NT) provides a ligand contact to substrate. The active-site Proton donor/acceptor is the C183. 184–185 (TH) lines the substrate pocket.

It belongs to the aspartate/glutamate racemases family.

It carries out the reaction L-glutamate = D-glutamate. It functions in the pathway cell wall biogenesis; peptidoglycan biosynthesis. Functionally, provides the (R)-glutamate required for cell wall biosynthesis. In Streptococcus uberis (strain ATCC BAA-854 / 0140J), this protein is Glutamate racemase.